The primary structure comprises 30 residues: Phospholemman-like protein (30 aa).

The protein belongs to the FXYD family. Post-translationally, phosphorylated by protein kinase a (PK-A) and protein kinase C (PK-C). Phosphorylated in response to insulin and adrenergic stimulation.

It localises to the microsome membrane. The protein resides in the endoplasmic reticulum membrane. Functionally, induces a hyperpolarization-activated chloride current when expressed in Xenopus oocytes. May have a functional role in muscle contraction. In Squalus acanthias (Spiny dogfish), this protein is Phospholemman-like protein.